We begin with the raw amino-acid sequence, 261 residues long: Indole-3-glycerol phosphate synthase (261 aa).

This sequence belongs to the TrpC family.

The catalysed reaction is 1-(2-carboxyphenylamino)-1-deoxy-D-ribulose 5-phosphate + H(+) = (1S,2R)-1-C-(indol-3-yl)glycerol 3-phosphate + CO2 + H2O. Its pathway is amino-acid biosynthesis; L-tryptophan biosynthesis; L-tryptophan from chorismate: step 4/5. The protein is Indole-3-glycerol phosphate synthase of Paraburkholderia phymatum (strain DSM 17167 / CIP 108236 / LMG 21445 / STM815) (Burkholderia phymatum).